We begin with the raw amino-acid sequence, 331 residues long: tRNA N6-adenosine threonylcarbamoyltransferase (331 aa).

2 residues coordinate Fe cation: histidine 108 and histidine 112. Substrate-binding positions include leucine 129–glycine 133, aspartate 161, glutamate 178, and serine 258. Aspartate 286 serves as a coordination point for Fe cation.

Belongs to the KAE1 / TsaD family. The cofactor is Fe(2+).

It localises to the cytoplasm. The enzyme catalyses L-threonylcarbamoyladenylate + adenosine(37) in tRNA = N(6)-L-threonylcarbamoyladenosine(37) in tRNA + AMP + H(+). Functionally, required for the formation of a threonylcarbamoyl group on adenosine at position 37 (t(6)A37) in tRNAs that read codons beginning with adenine. Is probably involved in the transfer of the threonylcarbamoyl moiety of threonylcarbamoyl-AMP (TC-AMP) to the N6 group of A37. The polypeptide is tRNA N6-adenosine threonylcarbamoyltransferase (Caldivirga maquilingensis (strain ATCC 700844 / DSM 13496 / JCM 10307 / IC-167)).